The following is an 800-amino-acid chain: Structural protein ORF800 (800 aa).

Coiled coils occupy residues 98–130 (AENI…YNLA), 447–475 (LLAE…ANNL), 514–567 (AINQ…ANNL), and 606–633 (AINQ…NLLA). The disordered stretch occupies residues 759–800 (AESIAESESETTESENNETTESTANSEGEKQEGEHGARLIRV). Residues 761-776 (SIAESESETTESENNE) are compositionally biased toward acidic residues. The segment covering 785-800 (EGEKQEGEHGARLIRV) has biased composition (basic and acidic residues).

Its subcellular location is the virion. The polypeptide is Structural protein ORF800 (Acidianus convivator (ATV)).